We begin with the raw amino-acid sequence, 448 residues long: Carbon catabolite repressor protein 4 homolog 3 (448 aa).

Low complexity predominate over residues 50–67 (SSTSGPSDSNPESSSNRS). A disordered region spans residues 50–92 (SSTSGPSDSNPESSSNRSYSRRWQNPLPRRQHPDQIPSSQIAR). Residue Glu-162 coordinates Mg(2+).

It belongs to the CCR4/nocturin family. Component of the CCR4-NOT complex, at least composed of CRR4 and CAF1 proteins. It depends on Mg(2+) as a cofactor.

It is found in the nucleus. It localises to the cytoplasm. The catalysed reaction is Exonucleolytic cleavage of poly(A) to 5'-AMP.. In terms of biological role, acts as a catalytic component of the CCR4-NOT core complex, which in the nucleus seems to be a general transcription factor, and in the cytoplasm the major mRNA deadenylase involved in mRNA turnover. The polypeptide is Carbon catabolite repressor protein 4 homolog 3 (CCR4-3) (Arabidopsis thaliana (Mouse-ear cress)).